The chain runs to 118 residues: Large ribosomal subunit protein bL20 (118 aa).

It belongs to the bacterial ribosomal protein bL20 family.

In terms of biological role, binds directly to 23S ribosomal RNA and is necessary for the in vitro assembly process of the 50S ribosomal subunit. It is not involved in the protein synthesizing functions of that subunit. The chain is Large ribosomal subunit protein bL20 from Staphylococcus saprophyticus subsp. saprophyticus (strain ATCC 15305 / DSM 20229 / NCIMB 8711 / NCTC 7292 / S-41).